The primary structure comprises 113 residues: Ig kappa chain V-II region 26-10 (113 aa).

Positions 1 to 23 are framework-1; sequence DVVMTQTPLSLPVSLGDQASISC. The cysteines at positions 23 and 93 are disulfide-linked. The tract at residues 24 to 39 is complementarity-determining-1; sequence RSSQSLVHSNGNTYLN. Residues 40 to 54 are framework-2; sequence WYLQKAGQSPKLLIY. A complementarity-determining-2 region spans residues 55–61; the sequence is KVSNRFS. A framework-3 region spans residues 62-93; the sequence is GVPDRFSGSGSGTDFTLKISRVEAEDLGIYFC. The interval 94–102 is complementarity-determining-3; that stretch reads SQTTHVPPT. Positions 103 to 112 are framework-4; sequence FGGGTKLEIK.

The protein is Ig kappa chain V-II region 26-10 of Mus musculus (Mouse).